Here is a 445-residue protein sequence, read N- to C-terminus: Glutamyl-tRNA(Gln) amidotransferase subunit D (445 aa).

An Asparaginase/glutaminase domain is found at 93-425 (SEIKIISTGG…EKIRSLMISN (333 aa)). Residues Thr103, Thr179, Asp180, and Lys258 contribute to the active site.

It belongs to the asparaginase 1 family. GatD subfamily. In terms of assembly, heterodimer of GatD and GatE.

It carries out the reaction L-glutamyl-tRNA(Gln) + L-glutamine + ATP + H2O = L-glutaminyl-tRNA(Gln) + L-glutamate + ADP + phosphate + H(+). Allows the formation of correctly charged Gln-tRNA(Gln) through the transamidation of misacylated Glu-tRNA(Gln) in organisms which lack glutaminyl-tRNA synthetase. The reaction takes place in the presence of glutamine and ATP through an activated gamma-phospho-Glu-tRNA(Gln). The GatDE system is specific for glutamate and does not act on aspartate. The chain is Glutamyl-tRNA(Gln) amidotransferase subunit D from Saccharolobus islandicus (strain M.16.27) (Sulfolobus islandicus).